A 292-amino-acid chain; its full sequence is Protease HtpX homolog (292 aa).

Transmembrane regions (helical) follow at residues 4–24 and 38–58; these read IALF…VASL and LGAL…ISLL. Histidine 144 lines the Zn(2+) pocket. Glutamate 145 is a catalytic residue. Histidine 148 contacts Zn(2+). The next 2 helical transmembrane spans lie at 152–172 and 199–219; these read GDMV…VFLS and ITTI…VAWF. Glutamate 224 provides a ligand contact to Zn(2+).

Belongs to the peptidase M48B family. Requires Zn(2+) as cofactor.

Its subcellular location is the cell inner membrane. In Acidovorax ebreus (strain TPSY) (Diaphorobacter sp. (strain TPSY)), this protein is Protease HtpX homolog.